Here is a 128-residue protein sequence, read N- to C-terminus: Modulator protein MzrA (128 aa).

Over 1 to 13 (MLALLRPYLSTRV) the chain is Cytoplasmic. Residues 14–34 (LCVLVVCFSALMLVAFIPTLF) traverse the membrane as a helical segment. The Periplasmic portion of the chain corresponds to 35–128 (RNDTALQIRA…RLSLRKQSVG (94 aa)).

This sequence belongs to the MzrA family. Interacts with EnvZ.

The protein resides in the cell inner membrane. In terms of biological role, modulates the activity of the EnvZ/OmpR two-component regulatory system, probably by directly modulating EnvZ enzymatic activity and increasing stability of phosphorylated OmpR. The chain is Modulator protein MzrA from Erwinia billingiae (strain Eb661).